The following is a 481-amino-acid chain: Cobyric acid synthase (481 aa).

A GATase cobBQ-type domain is found at 247-433; it reads AFNVVVPLLP…LHGLFDVPDS (187 aa). Cys-328 (nucleophile) is an active-site residue. His-425 is a catalytic residue.

It belongs to the CobB/CobQ family. CobQ subfamily.

It functions in the pathway cofactor biosynthesis; adenosylcobalamin biosynthesis. Its function is as follows. Catalyzes amidations at positions B, D, E, and G on adenosylcobyrinic A,C-diamide. NH(2) groups are provided by glutamine, and one molecule of ATP is hydrogenolyzed for each amidation. The polypeptide is Cobyric acid synthase (Alcanivorax borkumensis (strain ATCC 700651 / DSM 11573 / NCIMB 13689 / SK2)).